Here is a 251-residue protein sequence, read N- to C-terminus: GTP cyclohydrolase FolE2 (251 aa).

It belongs to the GTP cyclohydrolase IV family.

The enzyme catalyses GTP + H2O = 7,8-dihydroneopterin 3'-triphosphate + formate + H(+). Its pathway is cofactor biosynthesis; 7,8-dihydroneopterin triphosphate biosynthesis; 7,8-dihydroneopterin triphosphate from GTP: step 1/1. Functionally, converts GTP to 7,8-dihydroneopterin triphosphate. The sequence is that of GTP cyclohydrolase FolE2 from Desulfotalea psychrophila (strain LSv54 / DSM 12343).